The following is a 268-amino-acid chain: Proteasome subunit beta type-4 (268 aa).

This sequence belongs to the peptidase T1B family. As to quaternary structure, the 26S proteasome consists of a 20S proteasome core and two 19S regulatory subunits. The 20S proteasome core is composed of 28 subunits that are arranged in four stacked rings, resulting in a barrel-shaped structure. The two end rings are each formed by seven alpha subunits, and the two central rings are each formed by seven beta subunits. The catalytic chamber with the active sites is on the inside of the barrel.

The protein localises to the cytoplasm. It localises to the nucleus. Functionally, non-catalytic component of the proteasome, a multicatalytic proteinase complex which is characterized by its ability to cleave peptides with Arg, Phe, Tyr, Leu, and Glu adjacent to the leaving group at neutral or slightly basic pH. The proteasome has an ATP-dependent proteolytic activity. This Drosophila melanogaster (Fruit fly) protein is Proteasome subunit beta type-4 (Prosbeta7).